We begin with the raw amino-acid sequence, 642 residues long: MDSVSFEDVAVNFTLEEWALLDSSQKKLYEDVMQETFKNLVCLGKKWEDQDIEDDHRNQGRNRRCHMVERLCESRKGSKCGETTSQMPNVNINKETFTGAKPHECSFCGRDFMHHSSLNRHMRSHTGQKPNEYQECEKQPRKHKAVEKTFSYHHCFRKHERTHTRVKPYECKQCGKAFIYYQPFQRHERTHAGEKPYECKQCGKTFIYYQSFQQHAHTGKKPYECKQCGKAFICYQSFQRHERTHTGEKPYECKQCGKAFSCPTYFRTHERTHTGEKPYKCKECGKAFSFLSSFRRHKRTHSGEKPYECKECGKAFFYSASFRAHVITHTGARPYKCKECGKAFNSSNSCRVHERTHIGEKPYECKQCGKSFSWSISLRLHERTHTGEKPYECKQCHKTFSFSSSLREHETTHTGEKPYECKQCGKTFSFSSSLQRHERTHNAEKPYECKQCGKAFRCSSYFRIHERSHTGEKPYECKQCGKVFIRSSSFRLHERTHTGEKPYECKLCSKTFSFSSSLREHEKIHTGNKPFECKQCGKAFLRSSQIRLHERTHTGEKPYQCKQCGKAFISSSKFRMHERTHTGEKPYRCKQCGKAFRFSSSVRIHERSHTGEKPYECKQCGKAFISSSHFRLHERTHMGEKV.

Positions 4-76 (VSFEDVAVNF…MVERLCESRK (73 aa)) constitute a KRAB domain. The C2H2-type 1 zinc-finger motif lies at 103 to 125 (HECSFCGRDFMHHSSLNRHMRSH). Residues 141–163 (RKHKAVEKTFSYHHCFRKHERTH) form a C2H2-type 2; degenerate zinc finger. The C2H2-type 3 zinc-finger motif lies at 169 to 191 (YECKQCGKAFIYYQPFQRHERTH). The C2H2-type 4; atypical zinc-finger motif lies at 197–217 (YECKQCGKTFIYYQSFQQHAH). 15 consecutive C2H2-type zinc fingers follow at residues 223-245 (YECK…ERTH), 251-273 (YECK…ERTH), 279-301 (YKCK…KRTH), 307-329 (YECK…VITH), 335-357 (YKCK…ERTH), 363-385 (YECK…ERTH), 391-413 (YECK…ETTH), 419-441 (YECK…ERTH), 447-469 (YECK…ERSH), 475-497 (YECK…ERTH), 503-525 (YECK…EKIH), 531-553 (FECK…ERTH), 559-581 (YQCK…ERTH), 587-609 (YRCK…ERSH), and 615-637 (YECK…ERTH).

This sequence belongs to the krueppel C2H2-type zinc-finger protein family.

The protein resides in the nucleus. May be involved in transcriptional regulation. This chain is Zinc finger protein 14 (ZNF14), found in Pongo abelii (Sumatran orangutan).